A 74-amino-acid polypeptide reads, in one-letter code: Probable molt-inhibiting hormone (74 aa).

3 cysteine pairs are disulfide-bonded: C6/C43, C23/C39, and C26/C52. The residue at position 74 (A74) is an Alanine amide.

It localises to the secreted. In terms of biological role, inhibits Y-organs where molting hormone (ecdysteroid) is secreted. A molting cycle is initiated when MIH secretion diminishes or stops. Has little or no hyperglycemic activity. The sequence is that of Probable molt-inhibiting hormone from Jasus lalandii (Cape rock lobster).